A 222-amino-acid polypeptide reads, in one-letter code: Ribosomal RNA small subunit methyltransferase I (222 aa).

It belongs to the methyltransferase superfamily. RsmI family.

The protein resides in the cytoplasm. It carries out the reaction cytidine(1402) in 16S rRNA + S-adenosyl-L-methionine = 2'-O-methylcytidine(1402) in 16S rRNA + S-adenosyl-L-homocysteine + H(+). Its function is as follows. Catalyzes the 2'-O-methylation of the ribose of cytidine 1402 (C1402) in 16S rRNA. The chain is Ribosomal RNA small subunit methyltransferase I from Mycoplasmopsis pulmonis (strain UAB CTIP) (Mycoplasma pulmonis).